We begin with the raw amino-acid sequence, 274 residues long: Small ribosomal subunit protein uS2 (274 aa).

Residues 255-274 (AEAESEDKGEVLYSFDDEEE) are disordered.

Belongs to the universal ribosomal protein uS2 family.

This Gloeobacter violaceus (strain ATCC 29082 / PCC 7421) protein is Small ribosomal subunit protein uS2.